A 130-amino-acid chain; its full sequence is Protein ApaG (130 aa).

Positions 3–127 (RALTRDIEVT…FSLDTPDLRR (125 aa)) constitute an ApaG domain.

This chain is Protein ApaG, found in Allorhizobium ampelinum (strain ATCC BAA-846 / DSM 112012 / S4) (Agrobacterium vitis (strain S4)).